Here is a 156-residue protein sequence, read N- to C-terminus: Small ribosomal subunit protein uS7 (156 aa).

Belongs to the universal ribosomal protein uS7 family. Part of the 30S ribosomal subunit. Contacts proteins S9 and S11.

In terms of biological role, one of the primary rRNA binding proteins, it binds directly to 16S rRNA where it nucleates assembly of the head domain of the 30S subunit. Is located at the subunit interface close to the decoding center, probably blocks exit of the E-site tRNA. The polypeptide is Small ribosomal subunit protein uS7 (Proteus mirabilis (strain HI4320)).